Here is a 375-residue protein sequence, read N- to C-terminus: Growth/differentiation factor 8 (375 aa).

An N-terminal signal peptide occupies residues 1-18; sequence MQKLQISVYIYLFMLIVA. Positions 19–266 are excised as a propeptide; the sequence is GPVDLNENSE…VTDTPKRSRR (248 aa). N-linked (GlcNAc...) asparagine glycans are attached at residues Asn47 and Asn71. 4 disulfide bridges follow: Cys272/Cys282, Cys281/Cys340, Cys309/Cys372, and Cys313/Cys374.

It belongs to the TGF-beta family. In terms of assembly, homodimer; disulfide-linked. Interacts with WFIKKN2, leading to inhibit its activity. Interacts with FSTL3. In terms of processing, synthesized as large precursor molecule that undergoes proteolytic cleavage to generate an N-terminal propeptide and a disulfide linked C-terminal dimer, which is the biologically active molecule. The circulating form consists of a latent complex of the C-terminal dimer and other proteins, including its propeptide, which maintain the C-terminal dimer in a latent, inactive state. Ligand activation requires additional cleavage of the prodomain by a tolloid-like metalloproteinase.

It localises to the secreted. In terms of biological role, acts specifically as a negative regulator of skeletal muscle growth. This Bubalus bubalis (Domestic water buffalo) protein is Growth/differentiation factor 8 (MSTN).